The sequence spans 273 residues: Large ribosomal subunit protein uL2c (273 aa).

This sequence belongs to the universal ribosomal protein uL2 family. In terms of assembly, part of the 50S ribosomal subunit.

Its subcellular location is the plastid. The protein resides in the apicoplast. In Eimeria tenella (Coccidian parasite), this protein is Large ribosomal subunit protein uL2c (rpl2).